The following is a 627-amino-acid chain: MAAASPTAHDVYLFHEGSLFKSYQLFGSHYRELNGKSGYEFCVWAPHASEVRVAGDFNSWSGEEHVMHRVNDNGIWTLFIPGIGEKERYKYEIVTNNGEIRLKADPYAIYSEVRPNTASLTYDLEGYSWQDQKWQKKQKAKTLYEKPVFIYELHLGSWKKHSDGRHYSYKELSQTLIPYIKKHGFTHIELLPVYEHPYDRSWGYQGTGYYSPTSRFGPPHDLMKFVDECHQQNIGVILDWVPGHFCKDAHGLYMFDGEPLYEYKEERDRENWLWGTANFDLGKPEVHSFLISNALYWAEFYHIDGFRVDAVANILYWPNQDERHTNPYAVDFLKKLNQTMREAYPHVMMIAEDSTEWPQVTGAVEEGGLGFHYKWNMGWMNDVLKYMETPPEERRHCHQLISFSLLYAFSEHFVLPFSHDEVVYGKKSLLNKMPGDYWQKFAQYRLLLGYMTVHPGKKLIFMGSEFAQFDEWKDTEQLDWFLDSFPMHQKASVFTQDLLRFYQKSKILYEHDHRAQSFEWIDVHNDEQSIFSFIRYGQKHGEALVIICNFTPVVYHQYDVGVPFFTQYIEVLNSDSETYGGSGQINKKPLSAKKGALHHKPCYITMTIPPYGISILRAVKKRGEIKR.

Asp-309 (nucleophile) is an active-site residue. Glu-352 serves as the catalytic Proton donor.

Belongs to the glycosyl hydrolase 13 family. GlgB subfamily. As to quaternary structure, monomer.

The enzyme catalyses Transfers a segment of a (1-&gt;4)-alpha-D-glucan chain to a primary hydroxy group in a similar glucan chain.. Its pathway is glycan biosynthesis; glycogen biosynthesis. Catalyzes the formation of the alpha-1,6-glucosidic linkages in glycogen by scission of a 1,4-alpha-linked oligosaccharide from growing alpha-1,4-glucan chains and the subsequent attachment of the oligosaccharide to the alpha-1,6 position. This Bacillus subtilis (strain 168) protein is 1,4-alpha-glucan branching enzyme GlgB (glgB).